A 224-amino-acid chain; its full sequence is (S)-2-haloacid dehalogenase H-109 (224 aa).

Catalysis depends on Asp10, which acts as the Nucleophile. Residues 11 to 12 (LY), Arg41, and 118 to 119 (SN) contribute to the an (S)-2-haloacid site. Positions 175 to 180 (SSNSWD) are important for catalytic activity.

This sequence belongs to the HAD-like hydrolase superfamily. S-2-haloalkanoic acid dehalogenase family.

It carries out the reaction an (S)-2-haloacid + H2O = a (2R)-2-hydroxycarboxylate + a halide anion + H(+). The catalysed reaction is (S)-2-chloropropanoate + H2O = (R)-lactate + chloride + H(+). Functionally, catalyzes the hydrolytic dehalogenation of small (S)-2-haloalkanoic acids to yield the corresponding (R)-2-hydroxyalkanoic acids. Acts on acids of short chain lengths, C(2) to C(4), with inversion of configuration at C-2. Active with 2-halogenated carboxylic acids and converts only the S-isomer (or L-isomer) of 2-chloropropionic acid with inversion of configuration to produce R-lactate (or D-isomer). The protein is (S)-2-haloacid dehalogenase H-109 of Pseudomonas putida (Arthrobacter siderocapsulatus).